Here is an 815-residue protein sequence, read N- to C-terminus: Subtilisin-like protease SBT2.5 (815 aa).

A signal peptide spans 1–19 (MDIGLRIFVVFVLLVAVTA). One can recognise an Inhibitor I9 domain in the interval 21 to 124 (VYIVTMEGDP…RSVDKDWKVR (104 aa)). The Peptidase S8 domain occupies 120–671 (DWKVRRLTTH…SGHVNPSAAL (552 aa)). Catalysis depends on charge relay system residues Asp-160 and His-234. One can recognise a PA domain in the interval 397-501 (TLVSANDVLL…VSKSMDLIDY (105 aa)). Asn-503 and Asn-577 each carry an N-linked (GlcNAc...) asparagine glycan. The active-site Charge relay system is the Ser-596. Asn-701 carries N-linked (GlcNAc...) asparagine glycosylation.

The protein belongs to the peptidase S8 family. Expressed in roots, leaves and flowers of mature plants.

The chain is Subtilisin-like protease SBT2.5 from Arabidopsis thaliana (Mouse-ear cress).